The sequence spans 368 residues: DnaJ homolog subfamily C member 25 (368 aa).

Residues 25–47 traverse the membrane as a helical segment; sequence MQPRLFVLVALSVLLLSGRAGAL. Residues 57–132 enclose the J domain; it reads VCYDVLGVSR…ETRKDYDYML (76 aa). 2 consecutive transmembrane segments (helical) span residues 158 to 178 and 252 to 272; these read IVIL…WWSS and ILLF…SWYV.

It belongs to the DNAJC25 family.

Its subcellular location is the membrane. The polypeptide is DnaJ homolog subfamily C member 25 (dnajc25) (Xenopus tropicalis (Western clawed frog)).